The primary structure comprises 359 residues: MKSVRSFIRNDILAMSAYKITDVPPGFAKLDAMESPAHPFEGHEALMREWRAQLASAPIHLYPNPSGCGLQEALRSAFDIPDCAAVALGNGSDELIQFITMLTAKPGAAMLAAEPGFIMYRHNAALYGMDYVGVPLNGDFTLNLPAVLEAVRKHRPALTFIAYPNNPTGVCFTRAEIEAAIEASDGIVVVDEAYGAFNGDSFLPQAGRIPNLIVLRTLSKIGFAGLRIGYATGCPEVIGELQKILPPYNMNQLSLTTAKLALQHYGIISANIDSLKNERERMFAELGKICRLNAFPSQANFITIRVPDADLLFDTLKQNRILVKKLHGAHPLLEHCLRITIGSSAQNDAVLDVIRRLYR.

The residue at position 220 (lysine 220) is an N6-(pyridoxal phosphate)lysine.

It belongs to the class-II pyridoxal-phosphate-dependent aminotransferase family. Histidinol-phosphate aminotransferase subfamily. In terms of assembly, homodimer. Requires pyridoxal 5'-phosphate as cofactor.

It carries out the reaction L-histidinol phosphate + 2-oxoglutarate = 3-(imidazol-4-yl)-2-oxopropyl phosphate + L-glutamate. It participates in amino-acid biosynthesis; L-histidine biosynthesis; L-histidine from 5-phospho-alpha-D-ribose 1-diphosphate: step 7/9. The chain is Histidinol-phosphate aminotransferase from Neisseria gonorrhoeae (strain ATCC 700825 / FA 1090).